We begin with the raw amino-acid sequence, 63 residues long: Large ribosomal subunit protein eL37 (63 aa).

Zn(2+)-binding residues include C20, C23, C35, and C38. The C4-type zinc-finger motif lies at 20-38; sequence CRRCGRHSFNVRKGYCVAC.

The protein belongs to the eukaryotic ribosomal protein eL37 family. Zn(2+) serves as cofactor.

Its function is as follows. Binds to the 23S rRNA. The sequence is that of Large ribosomal subunit protein eL37 from Ignicoccus hospitalis (strain KIN4/I / DSM 18386 / JCM 14125).